The primary structure comprises 332 residues: MSDNKALPPAILLMGPTASGKTDLAMALSERLPCDLISVDSVMVYRGMDIGSAKPDPDTLTRYPHHLIDIRDPAEPYSAAEFRTDALRLMEQSVNAGRIPLLVGGTIMYYKALCQGLGDMPSADENVRGQILAEAEQVGWPALHEQLRQVDPVAAAKIHPNNRQRIQRALEVYRLTGKPLSHYWAADGANPENELNWDSVNGAALPYNALNLALAPVKREDLHARIAKRFQIMLEQGMIDEVEQLRRRGDLNVELPSIRAVGYRQVWSYLEGEFGREEMVEKATAATRQLAKRQMTWLRSWPEINWLSADDTQLVEAAMRLISQRLQSCNPL.

Glycine 15–threonine 22 provides a ligand contact to ATP. Residue threonine 17–threonine 22 coordinates substrate. 2 interaction with substrate tRNA regions span residues aspartate 40–methionine 43 and glutamine 164–arginine 168.

This sequence belongs to the IPP transferase family. Monomer. The cofactor is Mg(2+).

It catalyses the reaction adenosine(37) in tRNA + dimethylallyl diphosphate = N(6)-dimethylallyladenosine(37) in tRNA + diphosphate. Functionally, catalyzes the transfer of a dimethylallyl group onto the adenine at position 37 in tRNAs that read codons beginning with uridine, leading to the formation of N6-(dimethylallyl)adenosine (i(6)A). This is tRNA dimethylallyltransferase 2 from Hahella chejuensis (strain KCTC 2396).